The chain runs to 471 residues: 6-phosphofructo-2-kinase/fructose-2,6-bisphosphatase 1 (471 aa).

Ser-2 carries the post-translational modification N-acetylserine. The 6-phosphofructo-2-kinase stretch occupies residues 2–250 (SQEMGELTQT…VYYLMNIHVT (249 aa)). The residue at position 33 (Ser-33) is a Phosphoserine; by PKA. ATP is bound at residue 49–57 (GLPARGKTY). Beta-D-fructose 6-phosphate contacts are provided by Arg-82 and Arg-105. Asp-131 is an active-site residue. Thr-133 and Arg-139 together coordinate beta-D-fructose 6-phosphate. Ser-141 carries the post-translational modification Phosphoserine. The active site involves Cys-161. Residue 170-175 (NIRQVK) participates in ATP binding. Beta-D-fructose 6-phosphate contacts are provided by Lys-175, Arg-196, and Tyr-200. The tract at residues 251–471 (PRSIYLCRHG…EALDTVPAHY (221 aa)) is fructose-2,6-bisphosphatase. Arg-258 is a beta-D-fructose 2,6-bisphosphate binding site. Residue His-259 is the Tele-phosphohistidine intermediate of the active site. Residues Asn-265, Gly-271, and Arg-308 each contribute to the beta-D-fructose 2,6-bisphosphate site. Residue Glu-328 is the Proton donor/acceptor of the active site. Beta-D-fructose 2,6-bisphosphate contacts are provided by Tyr-339, Arg-353, Lys-357, Tyr-368, Gln-394, and Arg-398. 350–353 (FALR) contacts ATP. Residues 394–398 (QAVMR) and Tyr-430 each bind ATP.

This sequence in the C-terminal section; belongs to the phosphoglycerate mutase family. Homodimer. In terms of tissue distribution, liver.

It carries out the reaction beta-D-fructose 2,6-bisphosphate + H2O = beta-D-fructose 6-phosphate + phosphate. The catalysed reaction is beta-D-fructose 6-phosphate + ATP = beta-D-fructose 2,6-bisphosphate + ADP + H(+). With respect to regulation, phosphorylation at Ser-33 inhibits the kinase and activates the bisphosphatase. Its function is as follows. Synthesis and degradation of fructose 2,6-bisphosphate. This is 6-phosphofructo-2-kinase/fructose-2,6-bisphosphatase 1 from Bos taurus (Bovine).